We begin with the raw amino-acid sequence, 551 residues long: Probable alpha-glucosidase (551 aa).

The active-site Nucleophile is the aspartate 212. Glutamate 272 serves as the catalytic Proton donor.

Belongs to the glycosyl hydrolase 13 family.

It carries out the reaction Hydrolysis of terminal, non-reducing (1-&gt;4)-linked alpha-D-glucose residues with release of alpha-D-glucose.. This is Probable alpha-glucosidase (aglA) from Rhizobium meliloti (strain 1021) (Ensifer meliloti).